The primary structure comprises 199 residues: MSKQNKKDWKKFKDEHKEEYKVENEILEEETDEESQHQEPALGHPSYTALEEQLTLAEQKAHENWEKSVRALAELENVRRRMEREVANAHKYGVEKLISALLPVVDSLEQALQLADKNSDPSMHEGLELTMKLFLDALQKFDVEQIDPLGQTFDPQQHEAMSMQPAPGAPPNSVITVFQKGYKLSDRVIRPARVIVSTK.

The disordered stretch occupies residues 20 to 52 (YKVENEILEEETDEESQHQEPALGHPSYTALEE).

The protein belongs to the GrpE family. As to quaternary structure, homodimer.

It localises to the cytoplasm. In terms of biological role, participates actively in the response to hyperosmotic and heat shock by preventing the aggregation of stress-denatured proteins, in association with DnaK and GrpE. It is the nucleotide exchange factor for DnaK and may function as a thermosensor. Unfolded proteins bind initially to DnaJ; upon interaction with the DnaJ-bound protein, DnaK hydrolyzes its bound ATP, resulting in the formation of a stable complex. GrpE releases ADP from DnaK; ATP binding to DnaK triggers the release of the substrate protein, thus completing the reaction cycle. Several rounds of ATP-dependent interactions between DnaJ, DnaK and GrpE are required for fully efficient folding. This chain is Protein GrpE, found in Legionella pneumophila (strain Corby).